The sequence spans 218 residues: Elongation factor Ts (218 aa).

The involved in Mg(2+) ion dislocation from EF-Tu stretch occupies residues 82–85 (TDFV).

This sequence belongs to the EF-Ts family.

The protein resides in the cytoplasm. Associates with the EF-Tu.GDP complex and induces the exchange of GDP to GTP. It remains bound to the aminoacyl-tRNA.EF-Tu.GTP complex up to the GTP hydrolysis stage on the ribosome. The sequence is that of Elongation factor Ts from Prochlorococcus marinus (strain NATL2A).